Consider the following 966-residue polypeptide: Polycystin-2 (966 aa).

Residues M1–G106 are disordered. Residues M1–S217 are Cytoplasmic-facing. The segment covering V30 to E44 has biased composition (gly residues). The span at R46–R56 shows a compositional bias: basic and acidic residues. Over residues A58–S79 the composition is skewed to low complexity. S72 and S76 each carry phosphoserine. Acidic residues predominate over residues E91–E105. Position 135 is an omega-N-methylarginine (R135). Residues H147–E179 form a disordered region. Residues V218–M239 traverse the membrane as a helical segment. Topologically, residues M240–A466 are extracellular. 3 N-linked (GlcNAc...) asparagine glycosylation sites follow: N297, N303, and N326. A disulfide bond links C329 and C342. N360 and N373 each carry an N-linked (GlcNAc...) asparagine glycan. Residues F467–V487 form a helical membrane-spanning segment. The Cytoplasmic segment spans residues E488–S503. A helical membrane pass occupies residues F504 to I524. At Y525–A550 the chain is on the extracellular side. Residues Y551–L571 traverse the membrane as a helical segment. Q555 contacts cholesterol. The Cytoplasmic segment spans residues F572 to L595. A helical transmembrane segment spans residues F596–F617. Residues G618–E629 lie on the Extracellular side of the membrane. The segment at residues C630–F644 is an intramembrane region (pore-forming). A Ca(2+)-binding site is contributed by L639. Residues L639 to D641 carry the Selectivity filter motif. Over A645–R652 the chain is Extracellular. The chain crosses the membrane as a helical span at residues V653 to M673. The Cytoplasmic segment spans residues F674–A966. Residues H748–E783 form the EF-hand domain. Ca(2+) is bound by residues D761, D763, D765, E767, and E772. The tract at residues G764–I828 is disordered. Over residues L768–S793 the composition is skewed to basic and acidic residues. The segment covering L794–R805 has biased composition (low complexity). Phosphoserine is present on residues S799, S806, S810, and S827. The interval R801 to H820 is linker. Residues D808–G819 are important for interaction with PACS1 and PACS2. Positions G831–R870 form a coiled coil. Residues W914–A966 are disordered. Residues A919–V931 are compositionally biased toward polar residues.

It belongs to the polycystin family. In terms of assembly, homotetramer. Component of the heterotetrameric polycystin channel complex with PKD1; the tetramer contains one PKD1 chain and three PKD2 chains. Interaction with PKD1 is required for ciliary localization. Isoform 1 interacts with PKD1 while isoform 3 does not. Interacts with PKD1L1. Interacts with CD2AP. Interacts with HAX1. Interacts with NEK8. Part of a complex containing AKAP5, ADCY5, ADCY6 and PDE4C. Interacts (via C-terminus) with TRPV4 (via C-terminus). Interacts (via C-terminal acidic region) with PACS1 and PACS2; these interactions retain the protein in the endoplasmic reticulum and prevent trafficking to the cell membrane. Interacts with TMEM33; enhancing its opening at the ER membrane. Interacts with TMEM120A; TMEM120A inhibits PKD2 channel activity through the physical association of PKD2 with TMEM120A. Interacts (via N-terminus) with RYR2; regulates RYR2 channel activity. N-glycosylated. The four subunits in a tetramer probably differ in the extent of glycosylation; simultaneous glycosylation of all experimentally validated sites would probably create steric hindrance. Post-translationally, sumoylated by SUMO1; sumoylation regulates PKD2 membrane recycling and is necessary for intravascular pressure-induced arterial contractility. In terms of processing, phosphorylated. Phosphorylation is important for protein function; a mutant that lacks the N-terminal phosphorylation sites cannot complement a zebrafish pkd2-deficient mutant. PKD-mediated phosphorylation at the C-terminus regulates its function in the release of Ca(2+) stores from the endoplasmic reticulum. Phosphorylation at Ser-810 regulates PKD2 trafficking. Phosphorylation at Ser-72 is required for PKD2 trafficking to or retention at the lateral plasma membrane. Phosphorylation at Ser-799, Ser-810 and Ser-827 regulates PKD2 channel activity. In terms of tissue distribution, detected in kidney epithelium (at protein level). Highly expressed on basolateral membranes in distal convoluted tubules and medullary thick ascending limbs of Henle. Detected at much lower levels in cortical and medullary collecting tubules, and not detected in the glomerular tuft, in thin limbs of Henle, interstitium and blood vessels (at protein level). Expressed in mesenchymally derived structures in the developing embryo at day 12.5. Isoform 1 is predominantly expressed in kidney at all developmental stages with high levels also detected in lung. Isoform 3 shows highest expression in brain with lower expression in kidney and lung, low levels in thymus and is hardly detectable in liver.

It is found in the cell projection. Its subcellular location is the cilium membrane. It localises to the cell membrane. The protein resides in the basolateral cell membrane. The protein localises to the cytoplasmic vesicle membrane. It is found in the endoplasmic reticulum membrane. Its subcellular location is the golgi apparatus. It localises to the vesicle. The protein resides in the secreted. The protein localises to the extracellular exosome. The enzyme catalyses K(+)(in) = K(+)(out). It carries out the reaction Na(+)(in) = Na(+)(out). It catalyses the reaction Ca(2+)(in) = Ca(2+)(out). Its activity is regulated as follows. Channel activity is regulated by phosphorylation. The channel is activated by increased cytoplasmic Ca(2+) (in the uM range) and by membrane depolarization. TMEM120A inhibits the channel activity of PKD2, and mediates mechanosensitivity of the PKD2-TMEM120A channel complex. At the endoplasmic reticulum membrane (ER), TMEM33 enhances its channel activity. PKD1/ PKD2 complex on the plasma membrane is activated by PKD1 N-terminus. In terms of biological role, forms a nonselective cation channel. Can function as a homotetrameric ion channel or can form heteromer with PKD1. Displays distinct function depending on its subcellular localization and regulation by its binding partners. Functions as a cation channel, with a preference for monovalent cations over divalent cations that allows K(+), Na(+) and Ca(2+) influx, with low selectivity for Ca(2+). Involved in fluid-flow mechanosensation by the primary cilium in renal epithelium. In the endoplasmic reticulum, likely functions as a K(+) channel to facilitate Ca(2+) release. The heterotetrameric PKD1/PKD2 channel has higher Ca(2+) permeability than homomeric PKD2 channel and acts as a primarily Ca(2+)-permeable channel. PKD1 and PKD2 may function through a common signaling pathway that is necessary to maintain the normal, differentiated state of renal tubule cells. Interacts with and acts as a regulator of a number of other channels, such as TRPV4, TRPC1, IP3R, RYR2, ultimately further affecting intracellular signaling, to modulate intracellular Ca(2+) signaling. Together with TRPV4, forms mechano- and thermosensitive channels in cilium. In cardiomyocytes, PKD2 modulates Ca(2+) release from stimulated RYR2 receptors through direct association. Also involved in left-right axis specification via its role in sensing nodal flow; forms a complex with PKD1L1 in cilia to facilitate flow detection in left-right patterning. Acts as a regulator of cilium length together with PKD1. Mediates systemic blood pressure and contributes to the myogenic response in cerebral arteries though vasoconstriction. This Mus musculus (Mouse) protein is Polycystin-2.